Reading from the N-terminus, the 574-residue chain is Serine/arginine repetitive matrix protein 4 (574 aa).

Disordered stretches follow at residues 45-217 (LETP…HGGD), 257-291 (IVQN…ITRS), 366-422 (DLIS…SYSL), 454-508 (YCSS…VSSR), and 526-574 (RSRS…RARR). The span at 51-72 (PKDDEEKVKAKDLVTKTHEKNG) shows a compositional bias: basic and acidic residues. Composition is skewed to basic residues over residues 73 to 88 (HIKR…RRAR), 102 to 120 (PKTK…RHRS), and 128 to 184 (VRKK…HRKA). A compositionally biased stretch (basic and acidic residues) spans 194–217 (NRSEDCEKSGFRDGGRSSDVHGGD). Polar residues predominate over residues 275-289 (GNDTSSPPSSKTGIT). Residues 366–385 (DLISDRNRSPSHDRYEDGTR) are compositionally biased toward basic and acidic residues. Low complexity predominate over residues 405-422 (RSLSSGRRSYSRSSSYSL). The segment covering 454–477 (YCSSCKSRKHSRRRPSSPMRKRRR) has biased composition (basic residues). Positions 478 to 487 (DSPSHLEARR) are enriched in basic and acidic residues. Residues 496-508 (IPYYRPSPSVSSR) show a composition bias toward low complexity. The span at 526 to 539 (RSRSCSRSRSRSHS) shows a compositional bias: basic residues. A compositionally biased stretch (low complexity) spans 540–559 (HTYSSYRSYSRSSSWNSLYS). The span at 560–574 (RRSRSRSRSYSRARR) shows a compositional bias: basic residues.

This sequence belongs to the nSR100 family.

The protein localises to the nucleus. Functionally, splicing factor specifically required for neural cell differentiation. Acts in conjunction with nPTB/PTBP2 by binding directly to its regulated target transcripts and promotes neural-specific exon inclusion in many genes that function in neural cell differentiation. Required to promote the inclusion of neural-specific exon 10 in nPTB/PTBP2, leading to increased expression of neural-specific nPTB/PTBP2. The protein is Serine/arginine repetitive matrix protein 4 (srrm4) of Danio rerio (Zebrafish).